A 687-amino-acid chain; its full sequence is Polyphosphate kinase (687 aa).

Asparagine 45 contributes to the ATP binding site. Mg(2+) is bound by residues arginine 375 and arginine 405. The active-site Phosphohistidine intermediate is the histidine 435. 3 residues coordinate ATP: tyrosine 472, arginine 568, and histidine 596.

Belongs to the polyphosphate kinase 1 (PPK1) family. It depends on Mg(2+) as a cofactor. In terms of processing, an intermediate of this reaction is the autophosphorylated ppk in which a phosphate is covalently linked to a histidine residue through a N-P bond.

It carries out the reaction [phosphate](n) + ATP = [phosphate](n+1) + ADP. Catalyzes the reversible transfer of the terminal phosphate of ATP to form a long-chain polyphosphate (polyP). The protein is Polyphosphate kinase of Burkholderia ambifaria (strain MC40-6).